The sequence spans 338 residues: Lipoyl synthase (338 aa).

The tract at residues 1 to 24 is disordered; sequence MTTVQEAVPNLIPTQDATPRPAPK. [4Fe-4S] cluster-binding residues include Cys84, Cys89, Cys95, Cys110, Cys114, Cys117, and Ser324. Residues 96 to 313 form the Radical SAM core domain; the sequence is FSGGTATFMI…AEEGYKMGFK (218 aa).

This sequence belongs to the radical SAM superfamily. Lipoyl synthase family. The cofactor is [4Fe-4S] cluster.

The protein localises to the cytoplasm. The enzyme catalyses [[Fe-S] cluster scaffold protein carrying a second [4Fe-4S](2+) cluster] + N(6)-octanoyl-L-lysyl-[protein] + 2 oxidized [2Fe-2S]-[ferredoxin] + 2 S-adenosyl-L-methionine + 4 H(+) = [[Fe-S] cluster scaffold protein] + N(6)-[(R)-dihydrolipoyl]-L-lysyl-[protein] + 4 Fe(3+) + 2 hydrogen sulfide + 2 5'-deoxyadenosine + 2 L-methionine + 2 reduced [2Fe-2S]-[ferredoxin]. The protein operates within protein modification; protein lipoylation via endogenous pathway; protein N(6)-(lipoyl)lysine from octanoyl-[acyl-carrier-protein]: step 2/2. Functionally, catalyzes the radical-mediated insertion of two sulfur atoms into the C-6 and C-8 positions of the octanoyl moiety bound to the lipoyl domains of lipoate-dependent enzymes, thereby converting the octanoylated domains into lipoylated derivatives. This is Lipoyl synthase from Pseudomonas putida (strain W619).